The chain runs to 346 residues: LRP2-binding protein (346 aa).

One copy of the TPR repeat lies at 58–91 (AMAYFLRGQLYFEEGWYEEALAQFEEIQEKDHQA). Sel1-like repeat units lie at residues 92–124 (IYQLGVMYYDGLGTIANAEKGVNYMRKILDSSC), 132–167 (FAAAYNLGRAYFEGKGVKRSDEEAERLWLLAADNGN), 172–205 (VKAQSILGLFYSMKEPKELEKAFFWHSEACGNGS), 206–241 (LESQGALGLMYFYGQGIRQDTDAALHCLREAAERGN), 242–276 (VYAQGTLVEYYYKMKFFTKCVSFSKRIADYDEVHD), and 296–331 (AMAAFYHGRCLQLGLGIMKDEESAKHYYSKACRLNP).

In terms of assembly, interacts with LRP2.

The protein localises to the cytoplasm. May act as an adapter that regulates LRP2 function. The sequence is that of LRP2-binding protein (Lrp2bp) from Mus musculus (Mouse).